The following is a 455-amino-acid chain: Protein FAM124B (455 aa).

S49 carries the post-translational modification Phosphoserine. Positions 270-322 (TSVSAKRTSEPRSQRNQGKRSQGHSLELPEPSGSPTSDRCAGTSWKSPGRSFQ) are disordered. A compositionally biased stretch (polar residues) spans 313–322 (SWKSPGRSFQ).

Belongs to the FAM124 family. Interacts with CHD7 and CHD8.

It is found in the nucleus. This is Protein FAM124B (FAM124B) from Homo sapiens (Human).